A 194-amino-acid chain; its full sequence is Porimin (194 aa).

Positions 1–24 (MALCARAALLLGALQVLALPGAVA) are cleaved as a signal peptide. The Extracellular portion of the chain corresponds to 25–151 (QETYAQGSPS…PTKGKGSKFD (127 aa)). N-linked (GlcNAc...) asparagine glycosylation is found at asparagine 36, asparagine 47, asparagine 51, asparagine 59, asparagine 76, and asparagine 114. Residues 88–124 (KVSTPGVSPHVTPSASKSTPKTSASPNSTQTSASMTT) are disordered. The segment covering 99–124 (TPSASKSTPKTSASPNSTQTSASMTT) has biased composition (low complexity). The helical transmembrane segment at 152-172 (AGSFVGGIVLTLGVLSILYIG) threads the bilayer. Over 173–194 (CKMYYSRRGIRYRSIDEHDAII) the chain is Cytoplasmic. Serine 186 is subject to Phosphoserine.

This sequence belongs to the CD164 family.

The protein localises to the membrane. Its function is as follows. Implicated in oncotic cell death, characterized by cell swelling, organelle swelling, vacuolization and increased membrane permeability. The sequence is that of Porimin (Tmem123) from Rattus norvegicus (Rat).